Reading from the N-terminus, the 452-residue chain is Sesamin methylene transferase (452 aa).

It belongs to the GcvT family. In terms of assembly, homotrimer.

The catalysed reaction is (+)-sesamin + (6S)-5,6,7,8-tetrahydrofolyl-(gamma-L-Glu)(n) = (+)-sesamin monocatechol + (6R)-5,10-methylenetetrahydrofolyl-(gamma-L-Glu)(n). It carries out the reaction (+)-sesamin monocatechol + (6S)-5,6,7,8-tetrahydrofolyl-(gamma-L-Glu)(n) = (+)-sesamin dicatechol + (6R)-5,10-methylenetetrahydrofolyl-(gamma-L-Glu)(n). In terms of biological role, converts sesamin into sesamin mono- and di-catechol. Catalyzes a ring cleavage to transfer the methylene group to tetrahydrofolate (THF). Also active with (+)-episesamin, (-)-asarinin, sesaminol, (+)-sesamolin and piperine. This chain is Sesamin methylene transferase, found in Sinomonas sp. (strain No.22).